We begin with the raw amino-acid sequence, 7119 residues long: Replicase polyprotein 1ab (7119 aa).

The 127-residue stretch at 25–151 (RSDHVACTVP…EYTFLLRKNG (127 aa)) folds into the CoV Nsp1 globular domain. The BetaCoV Nsp1 C-terminal domain maps to 167-195 (TPYVEILDDLEADPTGKYSQNLLKKLIGG). Residues 197-472 (CIPIDQYMCG…WDKVVETANL (276 aa)) enclose the CoV Nsp2 N-terminal domain. Positions 339, 342, 358, and 360 each coordinate Zn(2+). The segment at 339-360 (CNACGRGTWCTGNAIQGFACDC) is C4. Positions 478–712 (QRSLNFCQQF…LDIMSKAMKL (235 aa)) constitute a CoV Nsp2 middle domain. The 134-residue stretch at 714–847 (HTNVSWAGTK…VSTLFRLKGG (134 aa)) folds into the CoV Nsp2 C-terminal domain. A Ubiquitin-like 1 domain is found at 851 to 960 (KKVTFGDVNT…MTFSINPVED (110 aa)). Macro domains follow at residues 1152-1321 (DLSK…KPDG) and 1322-1446 (LVYS…AIQT). The DPUP domain occupies 1446–1519 (TPETAFINNV…LEACRAYLTS (74 aa)). The Ubiquitin-like 2 domain occupies 1524-1579 (QVNIEVLVTIDGVNFRTVILNDTTTFRKQLGATFYKGVDISDAFPTVKMGGESLFV). The Peptidase C16 domain occupies 1593–1864 (EYYGTSDVTF…KVEVNPDLSN (272 aa)). The active-site For PL-PRO activity is Cys1634. 4 residues coordinate Zn(2+): Cys1714, Cys1717, Cys1749, and Cys1751. A C4-type zinc finger spans residues 1714 to 1751 (CTVCGIRDIEYTGMRACVYAGVNSMEELQSVFNETCVC). Catalysis depends on for PL-PRO activity residues His1800 and Asp1815. A Nucleic acid-binding domain is found at 1878–1995 (TIKYSPATIL…QLYDVAPIVL (118 aa)). In terms of domain architecture, G2M spans 2012–2133 (HNVPVVDDVP…AKITVTATTA (122 aa)). 3 helical membrane-spanning segments follow: residues 2112 to 2132 (VLLG…TATT), 2145 to 2165 (FVVN…LFFL), and 2222 to 2242 (LFLL…LVLF). Positions 2112–2395 (VLLGASSLFA…VTHIPLHGLV (284 aa)) are HD1. Positions 2259 to 2325 (LAIYKEVRSY…LQMLQTHITS (67 aa)) constitute a 3Ecto domain. 2 disulfides stabilise this stretch: Cys2275–Cys2303 and Cys2293–Cys2300. Transmembrane regions (helical) follow at residues 2326-2346 (YVLN…YVLY), 2350-2370 (FNVL…SAFV), and 2375-2395 (YNYI…HGLV). Residues 2409–2499 (KFYSHVINGC…TLRRLIKPTD (91 aa)) are Y1. The 374-residue stretch at 2409-2782 (KFYSHVINGC…LSVKFSATKI (374 aa)) folds into the CoV Nsp3 Y domain. Residues His2413, Cys2418, Cys2423, Cys2426, Cys2459, His2462, Cys2466, and Cys2469 each coordinate Zn(2+). Residues 2413–2426 (HVINGCKDTACLLC) form a ZF1 region. The interval 2459–2469 (CCKHNWNCVEC) is ZF2. The interval 2500 to 2598 (QSHYYVDSVV…LVDVNLVTTV (99 aa)) is Y2. The interval 2500 to 2782 (QSHYYVDSVV…LSVKFSATKI (283 aa)) is coV-Y. Positions 2599–2681 (GDSREIAIKM…DALQYAHKND (83 aa)) are Y3. Residues 2682–2782 (IQLTTECYNN…LSVKFSATKI (101 aa)) are Y4. Transmembrane regions (helical) follow at residues 2800–2820 (GYCI…FCLP), 3072–3092 (STSL…FYYI), 3105–3125 (CAVV…FIVA), and 3149–3169 (AFIM…IWML). The interval 2800-3169 (GYCILTLFVF…FGAVVPIWML (370 aa)) is HD2. The Nsp4C domain maps to 3195-3291 (VFTDGKLNCS…NCSVTSSVLQ (97 aa)). In terms of domain architecture, Peptidase C30 spans 3292–3597 (SGLVKMSAPS…NMQVMGVVMQ (306 aa)). Residues His3332 and Cys3439 each act as for 3CL-PRO activity in the active site. A run of 7 helical transmembrane segments spans residues 3603 to 3623 (ISYG…VSVM), 3637 to 3657 (TIPT…MFTV), 3662 to 3682 (TFMS…NIVY), 3707 to 3727 (RTTH…AIIV), 3735 to 3755 (MSNL…YVIG), 3784 to 3804 (LAKF…FILP), and 3808 to 3828 (LVLL…GVFS). Positions 3603–3828 (ISYGFIHWLI…MCTMYFGVFS (226 aa)) are HD3. Positions 3890–3972 (SKLTDLKCTS…DLFENSSVLQ (83 aa)) constitute a RdRp Nsp7 cofactor domain. In terms of domain architecture, RdRp Nsp8 cofactor spans 3973 to 4171 (ATLTEFSHLA…RSSSSAVKLQ (199 aa)). The Nsp9 ssRNA-binding domain maps to 4172-4281 (NNEIHPKGLK…GHIAATVRLQ (110 aa)). The ExoN/MTase coactivator domain maps to 4282-4420 (AGANTEFASN…DALRNNTVPQ (139 aa)). Residues Cys4355, Cys4358, His4364, Cys4371, Cys4397, Cys4400, Cys4408, and Cys4410 each coordinate Zn(2+). Zinc fingers lie at residues 4355–4371 (CLYC…SGVC) and 4397–4410 (CNVC…GCNC). Positions 4426–4683 (FLNRVRGSSV…AAETHKDCDF (258 aa)) constitute a NiRAN domain. Residues Asn4631 and Asp4640 each contribute to the Mn(2+) site. The Nsp12 Interface domain occupies 4688–4786 (IEWPLLEYDY…MNMDFNIHRH (99 aa)). Zn(2+) contacts are provided by His4717, Cys4723, Cys4728, Cys4732, and Cys4909. Residues 4787–5354 (RLALKELMMY…DLYSSPTTLQ (568 aa)) enclose the Nsp12 RNA-dependent RNA polymerase domain. Residues 4789–5003 (ALKELMMYAA…HQKMLKSMAA (215 aa)) form a rdRp Fingers N-ter region. The rdRp Palm N-ter stretch occupies residues 5004–5042 (TRGATCVIGTTKFYGGWDFMLKTLYKDVESPHLMGWDYP). In terms of domain architecture, RdRp catalytic spans 5034 to 5196 (PHLMGWDYPK…CYNSDYAAKG (163 aa)). Positions 5043–5101 (KCDRAMPNMCRILASLILARKHSTCCTNSDRFYRLANECAQVLSEYVLCGGGYYVKPGG) are rdRp Fingers C-ter. Residues His5064, Cys5067, and Cys5068 each coordinate Zn(2+). A rdRp Palm C-ter region spans residues 5102 to 5237 (TSSGDATTAY…EKGPHEFCSQ (136 aa)). Residues Ser5181, Asp5182, and Asp5183 contribute to the active site. Residues 5238–5354 (HTLYIKDGDD…DLYSSPTTLQ (117 aa)) are rdRp Thumb. The CV ZBD domain maps to 5355 to 5467 (AVGSCVVCHS…MEFNRLATCD (113 aa)). Zn(2+)-binding residues include Cys5359, Cys5362, Cys5370, Cys5373, Cys5380, Cys5383, His5387, His5393, Cys5404, Cys5409, Cys5426, and His5429. In terms of domain architecture, (+)RNA virus helicase ATP-binding spans 5611–5792 (TVPEEFANHV…MCNLGPDIFL (182 aa)). 5636–5643 (GPPGTGKS) serves as a coordination point for ATP. The (+)RNA virus helicase C-terminal domain maps to 5793-5967 (SVCYRCPKEI…GLFKDCSRED (175 aa)). One can recognise an ExoN domain in the interval 6024 to 6239 (LFITRDEAIR…RCLAIYDCFI (216 aa)). Catalysis depends on residues Asp6042, Glu6044, and Glu6143. Zn(2+)-binding residues include Cys6159, Cys6162, Cys6178, His6181, His6209, Cys6213, and His6216. Residues His6220 and Asp6225 contribute to the active site. A Zn(2+)-binding site is contributed by Cys6231. An N7-MTase domain is found at 6248–6475 (YPYISHEQKL…NLWSTFVKVQ (228 aa)). Position 6283–6289 (6283–6289 (DIGNPKG)) interacts with S-adenosyl-L-methionine. The gpppA-binding stretch occupies residues 6361 to 6375 (CNGGSLYVNKHAFHT). Zn(2+) is bound by residues Cys6399, Cys6421, Cys6432, and His6435. A Nsp15 N-terminal oligomerization domain is found at 6476–6536 (GLENIAFNVI…NVAFELYAKR (61 aa)). Positions 6537 to 6658 (AVRSHPDLNL…LYKKVNNEFV (122 aa)) constitute an AV-Nsp11N/CoV-Nsp15M domain. In terms of domain architecture, NendoU spans 6675 to 6814 (TVLTPMEEDF…RDGKVQTFYP (140 aa)). Active-site residues include His6705, His6720, Lys6760, Lys6863, Asp6947, Lys6987, and Glu7020. In terms of domain architecture, Nidovirus-type SAM-dependent 2'-O-MTase spans 6819-7113 (TNDWKPGLTM…TLNVSTDVLV (295 aa)).

The protein belongs to the coronaviruses polyprotein 1ab family. As to quaternary structure, interacts with host PHB and PHB2. In terms of assembly, interacts with papain-like protease nsp3 and non-structural protein 6. Monomer. Homodimer. Only the homodimer shows catalytic activity. As to quaternary structure, interacts with nsp8 and nsp12 to form the replication-transcription complex (RTC): nsp12, nsp7, two subunits of nsp8, and up to two subunits of nsp13. In terms of assembly, interacts with nsp7, nsp13 and nsp12 to form the replication-transcription complex (RTC): nsp12, nsp7, two subunits of nsp8, and up to two subunits of nsp13. Interacts with nsp12. As to quaternary structure, interacts with proofreading exoribonuclease nsp14 and 2'-O-methyltransferase nsp16; these interactions enhance nsp14 and nsp16 enzymatic activities. In terms of assembly, interacts with nsp7 and nsp8 to form the replication-transcription complex (RTC): nsp12, nsp7, two subunits of nsp8, and up to two subunits of nsp13. Interacts with nsp9. Interacts with nsp8 to form the replication-transcription complex (RTC): nsp12, nsp7, two subunits of nsp8, and up to two subunits of nsp13. Requires Mn(2+) as cofactor. The cofactor is Mg(2+). Specific enzymatic cleavages in vivo by its own proteases yield mature proteins. 3CL-PRO and PL-PRO proteinases are autocatalytically processed.

The protein resides in the host membrane. It localises to the host cytoplasm. The protein localises to the host perinuclear region. Its subcellular location is the host endoplasmic reticulum-Golgi intermediate compartment. It catalyses the reaction RNA(n) + a ribonucleoside 5'-triphosphate = RNA(n+1) + diphosphate. The enzyme catalyses ATP + H2O = ADP + phosphate + H(+). It carries out the reaction Thiol-dependent hydrolysis of ester, thioester, amide, peptide and isopeptide bonds formed by the C-terminal Gly of ubiquitin (a 76-residue protein attached to proteins as an intracellular targeting signal).. The catalysed reaction is a 5'-end (N(7)-methyl 5'-triphosphoguanosine)-ribonucleoside in mRNA + S-adenosyl-L-methionine = a 5'-end (N(7)-methyl 5'-triphosphoguanosine)-(2'-O-methyl-ribonucleoside) in mRNA + S-adenosyl-L-homocysteine + H(+). It catalyses the reaction uridylyl-uridylyl-ribonucleotide-RNA = a 3'-end uridylyl-2',3'-cyclophospho-uridine-RNA + a 5'-end dephospho-ribonucleoside-RNA. The enzyme catalyses a 5'-end diphospho-ribonucleoside in mRNA + GTP + H(+) = a 5'-end (5'-triphosphoguanosine)-ribonucleoside in mRNA + diphosphate. It carries out the reaction a 5'-end (5'-triphosphoguanosine)-ribonucleoside in mRNA + S-adenosyl-L-methionine = a 5'-end (N(7)-methyl 5'-triphosphoguanosine)-ribonucleoside in mRNA + S-adenosyl-L-homocysteine. Functionally, the replicase polyprotein of coronaviruses is a multifunctional protein: it contains the activities necessary for the transcription of negative stranded RNA, leader RNA, subgenomic mRNAs and progeny virion RNA as well as proteinases responsible for the cleavage of the polyprotein into functional products. Its function is as follows. Inhibits host translation by interacting with the 40S ribosomal subunit. The nsp1-40S ribosome complex further induces an endonucleolytic cleavage near the 5'UTR of host mRNAs, targeting them for degradation. Viral mRNAs are not susceptible to nsp1-mediated endonucleolytic RNA cleavage thanks to the presence of a 5'-end leader sequence and are therefore protected from degradation. By suppressing host gene expression, nsp1 facilitates efficient viral gene expression in infected cells and evasion from host immune response. May play a role in the modulation of host cell survival signaling pathway by interacting with host PHB and PHB2. Indeed, these two proteins play a role in maintaining the functional integrity of the mitochondria and protecting cells from various stresses. In terms of biological role, responsible for the cleavages located at the N-terminus of the replicase polyprotein. In addition, PL-PRO possesses a deubiquitinating/deISGylating activity and processes both 'Lys-48'- and 'Lys-63'-linked polyubiquitin chains from cellular substrates. Participates together with nsp4 in the assembly of virally-induced cytoplasmic double-membrane vesicles necessary for viral replication. Antagonizes innate immune induction of type I interferon by blocking the phosphorylation, dimerization and subsequent nuclear translocation of host IRF3. Also prevents host NF-kappa-B signaling. Functionally, participates in the assembly of virally-induced cytoplasmic double-membrane vesicles necessary for viral replication. Its function is as follows. Cleaves the C-terminus of replicase polyprotein at 11 sites. Recognizes substrates containing the core sequence [ILMVF]-Q-|-[SGACN]. Also able to bind an ADP-ribose-1''-phosphate (ADRP). Plays a role in the initial induction of autophagosomes from host endoplasmic reticulum. Later, limits the expansion of these phagosomes that are no longer able to deliver viral components to lysosomes. In terms of biological role, forms a hexadecamer with nsp8 (8 subunits of each) that may participate in viral replication by acting as a primase. Alternatively, may synthesize substantially longer products than oligonucleotide primers. Functionally, forms a hexadecamer with nsp7 (8 subunits of each) that may participate in viral replication by acting as a primase. Alternatively, may synthesize substantially longer products than oligonucleotide primers. Its function is as follows. Forms a primer, NSP9-pU, which is utilized by the polymerase for the initiation of RNA chains. Interacts with ribosome signal recognition particle RNA (SRP). Together with NSP8, suppress protein integration into the cell membrane, thereby disrupting host immune defenses. Plays a pivotal role in viral transcription by stimulating both nsp14 3'-5' exoribonuclease and nsp16 2'-O-methyltransferase activities. Therefore plays an essential role in viral mRNAs cap methylation. In terms of biological role, RNA-directed RNA polymerase that catalyzes the transcription of viral genomic and subgenomic RNAs. Acts in complex with nsp7 and nsp8 to transcribe both the minus and positive strands of genomic RNA. The kinase-like NiRAN domain of NSP12 attaches one or more nucleotides to the amino terminus of NSP9, forming a covalent RNA-protein intermediate that serves as transcription/replication primer. Subgenomic RNAs (sgRNAs) are formed by discontinuous transcription: The polymerase has the ability to pause at transcription-regulating sequences (TRS) and jump to the leader TRS, resulting in a major deletion. This creates a series of subgenomic RNAs that are replicated, transcribed and translated. In addition, Nsp12 is a subunit of the viral RNA capping enzyme that catalyzes the RNA guanylyltransferase reaction for genomic and sub-genomic RNAs. Subsequently, the NiRAN domain transfers RNA to GDP, and forms the core cap structure GpppA-RNA. Functionally, RNA-directed RNA polymerase that catalyzes the transcription of viral genomic and subgenomic RNAs. Acts in complex with nsp7 and nsp8 to transcribe both the minus and positive strands of genomic RNA. Subgenomic RNAs (sgRNAs) are formed by discontinuous transcription: The polymerase has the ability to pause at transcription-regulating sequences (TRS) and jump to the leader TRS, resulting in a major deletion. This creates a series of subgenomic RNAs that are replicated, transcribed and translated. In addition, Nsp12 is a subunit of the viral RNA capping enzyme that catalyzes the RNA guanylyltransferase reaction for genomic and sub-genomic RNAs. The kinase-like NiRAN domain of NSP12 transfers RNA to the amino terminus of NSP9, forming a covalent RNA-protein intermediate. Subsequently, the NiRAN domain transfers RNA to GDP, and forms the core cap structure GpppA-RNA. Its function is as follows. Multi-functional protein with a zinc-binding domain in N-terminus displaying RNA and DNA duplex-unwinding activities with 5' to 3' polarity. Activity of helicase is dependent on magnesium. Plays a role in viral RNA synthesis through two distinct activities. The N7-guanine methyltransferase activity plays a role in the formation of the cap structure GpppA-RNA. The proofreading exoribonuclease reduces the sensitivity of the virus to RNA mutagens during replication. This activity acts on both ssRNA and dsRNA in a 3'-5' direction. In terms of biological role, plays a role in viral transcription/replication and prevents the simultaneous activation of host cell dsRNA sensors, such as MDA5/IFIH1, OAS, and PKR. Acts by degrading the 5'-polyuridines generated during replication of the poly(A) region of viral genomic and subgenomic RNAs. Catalyzes a two-step reaction in which a 2'3'-cyclic phosphate (2'3'-cP) is first generated by 2'-O transesterification, which is then hydrolyzed to a 3'-phosphate (3'-P). If not degraded, poly(U) RNA would hybridize with poly(A) RNA tails and activate host dsRNA sensors. Functionally, methyltransferase that mediates mRNA cap 2'-O-ribose methylation to the 5'-cap structure of viral mRNAs. N7-methyl guanosine cap is a prerequisite for binding of nsp16. Therefore plays an essential role in viral mRNAs cap methylation which is essential to evade immune system. The chain is Replicase polyprotein 1ab (rep) from Tylonycteris pachypus (Lesser bamboo bat).